Here is a 454-residue protein sequence, read N- to C-terminus: Chromosomal replication initiator protein DnaA (454 aa).

Residues 1-83 (MMTDSMRLVW…RPLKVLLEVA (83 aa)) are domain I, interacts with DnaA modulators. The domain II stretch occupies residues 83-115 (AECVAEAPETPEEAPQQLCLPAFADIPRPSSGR). The interval 116 to 333 (LLNRDFTFDS…SGIKGLAARN (218 aa)) is domain III, AAA+ region. Positions 160, 162, 163, and 164 each coordinate ATP. Positions 334–454 (SIMGRGIDLK…LCGKIEAGEF (121 aa)) are domain IV, binds dsDNA.

Belongs to the DnaA family. As to quaternary structure, oligomerizes as a right-handed, spiral filament on DNA at oriC.

It localises to the cytoplasm. Functionally, plays an essential role in the initiation and regulation of chromosomal replication. ATP-DnaA binds to the origin of replication (oriC) to initiate formation of the DNA replication initiation complex once per cell cycle. Binds the DnaA box (a 9 base pair repeat at the origin) and separates the double-stranded (ds)DNA. Forms a right-handed helical filament on oriC DNA; dsDNA binds to the exterior of the filament while single-stranded (ss)DNA is stabiized in the filament's interior. The ATP-DnaA-oriC complex binds and stabilizes one strand of the AT-rich DNA unwinding element (DUE), permitting loading of DNA polymerase. After initiation quickly degrades to an ADP-DnaA complex that is not apt for DNA replication. Binds acidic phospholipids. The polypeptide is Chromosomal replication initiator protein DnaA (Desulfatibacillum aliphaticivorans).